A 201-amino-acid polypeptide reads, in one-letter code: UPF0637 protein LCA_0842 (201 aa).

The protein belongs to the UPF0637 family.

The sequence is that of UPF0637 protein LCA_0842 from Latilactobacillus sakei subsp. sakei (strain 23K) (Lactobacillus sakei subsp. sakei).